The sequence spans 395 residues: Pyridinium-3,5-bisthiocarboxylic acid mononucleotide nickel insertion protein (395 aa).

It belongs to the LarC family.

The enzyme catalyses Ni(II)-pyridinium-3,5-bisthiocarboxylate mononucleotide = pyridinium-3,5-bisthiocarboxylate mononucleotide + Ni(2+). Its function is as follows. Involved in the biosynthesis of a nickel-pincer cofactor ((SCS)Ni(II) pincer complex). Binds Ni(2+), and functions in nickel delivery to pyridinium-3,5-bisthiocarboxylic acid mononucleotide (P2TMN), to form the mature cofactor. Is thus probably required for the activation of nickel-pincer cofactor-dependent enzymes. The sequence is that of Pyridinium-3,5-bisthiocarboxylic acid mononucleotide nickel insertion protein from Staphylococcus epidermidis (strain ATCC 35984 / DSM 28319 / BCRC 17069 / CCUG 31568 / BM 3577 / RP62A).